The primary structure comprises 308 residues: HPr kinase/phosphorylase (308 aa).

Active-site residues include H141 and K162. 156 to 163 contributes to the ATP binding site; it reads GKSGVGKS. S163 lines the Mg(2+) pocket. Residue D180 is the Proton acceptor; for phosphorylation activity. Proton donor; for dephosphorylation activity of the active site. The segment at 204–213 is important for the catalytic mechanism of both phosphorylation and dephosphorylation; the sequence is MEIRGVGILD. E205 provides a ligand contact to Mg(2+). Residue R246 is part of the active site. An important for the catalytic mechanism of dephosphorylation region spans residues 267–272; sequence PVKPGR.

It belongs to the HPrK/P family. Homohexamer. The cofactor is Mg(2+).

It carries out the reaction [HPr protein]-L-serine + ATP = [HPr protein]-O-phospho-L-serine + ADP + H(+). It catalyses the reaction [HPr protein]-O-phospho-L-serine + phosphate + H(+) = [HPr protein]-L-serine + diphosphate. In terms of biological role, catalyzes the ATP- as well as the pyrophosphate-dependent phosphorylation of a specific serine residue in HPr, a phosphocarrier protein of the phosphoenolpyruvate-dependent sugar phosphotransferase system (PTS). HprK/P also catalyzes the pyrophosphate-producing, inorganic phosphate-dependent dephosphorylation (phosphorolysis) of seryl-phosphorylated HPr (P-Ser-HPr). The two antagonistic activities of HprK/P are regulated by several intracellular metabolites, which change their concentration in response to the absence or presence of rapidly metabolisable carbon sources (glucose, fructose, etc.) in the growth medium. Therefore, by controlling the phosphorylation state of HPr, HPrK/P is a sensor enzyme that plays a major role in the regulation of carbon metabolism and sugar transport: it mediates carbon catabolite repression (CCR), and regulates PTS-catalyzed carbohydrate uptake and inducer exclusion. In Peptoclostridium acidaminophilum (Eubacterium acidaminophilum), this protein is HPr kinase/phosphorylase.